The sequence spans 123 residues: ATP synthase epsilon chain (123 aa).

It belongs to the ATPase epsilon chain family. As to quaternary structure, F-type ATPases have 2 components, CF(1) - the catalytic core - and CF(0) - the membrane proton channel. CF(1) has five subunits: alpha(3), beta(3), gamma(1), delta(1), epsilon(1). CF(0) has three main subunits: a, b and c.

It is found in the cell inner membrane. Its function is as follows. Produces ATP from ADP in the presence of a proton gradient across the membrane. This Helicobacter pylori (strain HPAG1) protein is ATP synthase epsilon chain.